The primary structure comprises 226 residues: PKHD-type hydroxylase LHK_00496 (226 aa).

The region spanning R78–S178 is the Fe2OG dioxygenase domain. Residues H96, D98, and H159 each coordinate Fe cation. R169 contacts 2-oxoglutarate.

The cofactor is Fe(2+). L-ascorbate serves as cofactor.

This Laribacter hongkongensis (strain HLHK9) protein is PKHD-type hydroxylase LHK_00496.